The chain runs to 249 residues: 3-deoxy-manno-octulosonate cytidylyltransferase (249 aa).

This sequence belongs to the KdsB family.

It localises to the cytoplasm. It catalyses the reaction 3-deoxy-alpha-D-manno-oct-2-ulosonate + CTP = CMP-3-deoxy-beta-D-manno-octulosonate + diphosphate. It participates in nucleotide-sugar biosynthesis; CMP-3-deoxy-D-manno-octulosonate biosynthesis; CMP-3-deoxy-D-manno-octulosonate from 3-deoxy-D-manno-octulosonate and CTP: step 1/1. The protein operates within bacterial outer membrane biogenesis; lipopolysaccharide biosynthesis. In terms of biological role, activates KDO (a required 8-carbon sugar) for incorporation into bacterial lipopolysaccharide in Gram-negative bacteria. The protein is 3-deoxy-manno-octulosonate cytidylyltransferase of Oleidesulfovibrio alaskensis (strain ATCC BAA-1058 / DSM 17464 / G20) (Desulfovibrio alaskensis).